A 922-amino-acid polypeptide reads, in one-letter code: Disintegrin and metalloproteinase domain-containing protein 10 homolog (922 aa).

Positions 1–26 (MSSPIRNRLQLVVTLIFCLFFENVNG) are cleaved as a signal peptide. Residues 27 to 228 (LNNFIDNFET…YMTMGGRSKR (202 aa)) constitute a propeptide that is removed on maturation. Asn74, Asn185, and Asn346 each carry an N-linked (GlcNAc...) asparagine glycan. Over 229–745 (ANTLRDHDGL…ETLTQWAQDN (517 aa)) the chain is Extracellular. Residues 242–480 (RTCSLYMQAD…CSVKNISAVL (239 aa)) form the Peptidase M12B domain. His426 lines the Zn(2+) pocket. Residue Glu427 is part of the active site. Positions 430 and 436 each coordinate Zn(2+). Cysteines 442 and 471 form a disulfide. A glycan (N-linked (GlcNAc...) asparagine) is linked at Asn475. The Disintegrin domain occupies 511–615 (SAFCGNQIYE…QCPVSPPKHD (105 aa)). 5 disulfides stabilise this stretch: Cys542–Cys577, Cys564–Cys572, Cys588–Cys607, Cys594–Cys626, and Cys619–Cys631. Asn632 carries an N-linked (GlcNAc...) asparagine glycan. Cystine bridges form between Cys636/Cys659, Cys644/Cys665, Cys655/Cys707, and Cys700/Cys713. Asn677 carries N-linked (GlcNAc...) asparagine glycosylation. The helical transmembrane segment at 746-766 (WWVVGVGGLVFLVIMALFVKC) threads the bilayer. At 767-922 (CAVHTPSTNP…SGNGGKKKGK (156 aa)) the chain is on the cytoplasmic side. 2 disordered regions span residues 797 to 837 (QHRQ…PSAP) and 864 to 922 (PGSS…KKGK). Low complexity predominate over residues 805-834 (AAGSVPPGPGAQPRSGAASAPSRTTPSARP).

In terms of assembly, may interact with tetraspanin tsp-12; the interaction promotes sup-17 cell membrane localization. Requires Zn(2+) as cofactor. Expressed in the germline.

The protein resides in the cell membrane. The protein localises to the basolateral cell membrane. Its subcellular location is the cytoplasmic vesicle membrane. The enzyme catalyses Endopeptidase of broad specificity.. Functionally, metalloprotease. Acts together with protease adm-4 and in a cell autonomous manner to facilitate lin-12/Notch signaling during developmental cell fate decision, including anchor cell/ventral uterine precursor cell decision and vulva precursor cell specification. By modulating glp-1/Notch signaling, plays a role in germline development. Probably by modulating BMP-like Sma/Mab signaling via the shedding of unc-40 ectodomain, involved in the regulation of body size and mesoderm development. Probably by shedding ephrin efn-4, regulates axon guidance of SDQL neuron during development. The polypeptide is Disintegrin and metalloproteinase domain-containing protein 10 homolog (Caenorhabditis elegans).